We begin with the raw amino-acid sequence, 199 residues long: Recombination protein RecR (199 aa).

A C4-type zinc finger spans residues Cys57–Cys72. A Toprim domain is found at Ser80 to Ala176.

Belongs to the RecR family.

Its function is as follows. May play a role in DNA repair. It seems to be involved in an RecBC-independent recombinational process of DNA repair. It may act with RecF and RecO. The polypeptide is Recombination protein RecR (Lactobacillus johnsonii (strain CNCM I-12250 / La1 / NCC 533)).